The chain runs to 350 residues: Inhibitor of nuclear factor kappa-B kinase-interacting protein (350 aa).

Over residues 1–11 (MSEVKSRKKSG) the composition is skewed to basic residues. Residues 1–39 (MSEVKSRKKSGPKGAPAAEPGKRSEGGKTPVARSSGGGG) form a disordered region. Residues 46-62 (CLSLLSLGTCLGLAWFV) form a helical membrane-spanning segment. An N-linked (GlcNAc...) asparagine glycan is attached at Asn-144. Residues 184–217 (GLVTDVISLTDSVQELENKIEKVEKNTVKNIGDL) are a coiled coil. An N-linked (GlcNAc...) asparagine glycan is attached at Asn-328.

In terms of processing, N-glycosylated. Isoform 4 is glycosylated at Asn-154. As to expression, expressed in vein endothelial cells. Isoform 4 is expressed in lung, kidney, spleen, thymus and skeletal muscle.

The protein localises to the endoplasmic reticulum membrane. Functionally, target of p53/TP53 with pro-apoptotic function. This Homo sapiens (Human) protein is Inhibitor of nuclear factor kappa-B kinase-interacting protein (IKBIP).